The primary structure comprises 117 residues: Large ribosomal subunit protein bL20 (117 aa).

It belongs to the bacterial ribosomal protein bL20 family.

Functionally, binds directly to 23S ribosomal RNA and is necessary for the in vitro assembly process of the 50S ribosomal subunit. It is not involved in the protein synthesizing functions of that subunit. The protein is Large ribosomal subunit protein bL20 of Roseiflexus sp. (strain RS-1).